The primary structure comprises 380 residues: Septin homolog spn4 (380 aa).

A Septin-type G domain is found at 25–298 (NGVAFTLMLC…EQYRQEQMKV (274 aa)). The G1 motif stretch occupies residues 35–42 (GESGLGKT). Residues 35-42 (GESGLGKT), Thr70, Gly96, 175-183 (KADMYTRRD), Gly231, and Arg247 each bind GTP. Positions 93-96 (DTPG) are G3 motif. The interval 174-177 (AKAD) is G4 motif.

This sequence belongs to the TRAFAC class TrmE-Era-EngA-EngB-Septin-like GTPase superfamily. Septin GTPase family. Component of the septin complex composed of two copies of each spn1, spn2, spn3 and spn4.

It localises to the cytoplasm. It is found in the cell cortex. Functionally, plays a role in the cell cycle. Involved in a late stage of septum formation leading to the separation of the daughter cells. This Schizosaccharomyces pombe (strain 972 / ATCC 24843) (Fission yeast) protein is Septin homolog spn4 (spn4).